Reading from the N-terminus, the 197-residue chain is Protein GrpE (197 aa).

Over residues 1-12 (MTDSDGKTDKSG) the composition is skewed to basic and acidic residues. Residues 1 to 35 (MTDSDGKTDKSGEPAAEVEPVVSKPYVMPDDPEDD) form a disordered region.

It belongs to the GrpE family. In terms of assembly, homodimer.

The protein resides in the cytoplasm. Its function is as follows. Participates actively in the response to hyperosmotic and heat shock by preventing the aggregation of stress-denatured proteins, in association with DnaK and GrpE. It is the nucleotide exchange factor for DnaK and may function as a thermosensor. Unfolded proteins bind initially to DnaJ; upon interaction with the DnaJ-bound protein, DnaK hydrolyzes its bound ATP, resulting in the formation of a stable complex. GrpE releases ADP from DnaK; ATP binding to DnaK triggers the release of the substrate protein, thus completing the reaction cycle. Several rounds of ATP-dependent interactions between DnaJ, DnaK and GrpE are required for fully efficient folding. This chain is Protein GrpE, found in Nitrobacter winogradskyi (strain ATCC 25391 / DSM 10237 / CIP 104748 / NCIMB 11846 / Nb-255).